Consider the following 406-residue polypeptide: Acetate kinase (406 aa).

A Mg(2+)-binding site is contributed by Asn10. Lys17 serves as a coordination point for ATP. Residue Arg92 coordinates substrate. Asp151 acts as the Proton donor/acceptor in catalysis. Residues 211–215, 286–288, and 335–339 each bind ATP; these read HLGSG, DFR, and GIGEN. Mg(2+) is bound at residue Glu389.

The protein belongs to the acetokinase family. As to quaternary structure, homodimer. Mg(2+) is required as a cofactor. The cofactor is Mn(2+).

Its subcellular location is the cytoplasm. It carries out the reaction acetate + ATP = acetyl phosphate + ADP. Its pathway is metabolic intermediate biosynthesis; acetyl-CoA biosynthesis; acetyl-CoA from acetate: step 1/2. Functionally, catalyzes the formation of acetyl phosphate from acetate and ATP. Can also catalyze the reverse reaction. The sequence is that of Acetate kinase from Buchnera aphidicola subsp. Cinara cedri (strain Cc).